The primary structure comprises 426 residues: Phosphoribosylamine--glycine ligase (426 aa).

The region spanning 107 to 313 (KDFMQKYGVK…FLNVINSALN (207 aa)) is the ATP-grasp domain. 133–194 (LDKISYPVVI…EEFLDGVEIS (62 aa)) is a binding site for ATP. 2 residues coordinate Mg(2+): glutamate 283 and asparagine 285.

The protein belongs to the GARS family. It depends on Mg(2+) as a cofactor. Requires Mn(2+) as cofactor.

It carries out the reaction 5-phospho-beta-D-ribosylamine + glycine + ATP = N(1)-(5-phospho-beta-D-ribosyl)glycinamide + ADP + phosphate + H(+). The protein operates within purine metabolism; IMP biosynthesis via de novo pathway; N(1)-(5-phospho-D-ribosyl)glycinamide from 5-phospho-alpha-D-ribose 1-diphosphate: step 2/2. The chain is Phosphoribosylamine--glycine ligase from Fusobacterium nucleatum subsp. nucleatum (strain ATCC 25586 / DSM 15643 / BCRC 10681 / CIP 101130 / JCM 8532 / KCTC 2640 / LMG 13131 / VPI 4355).